The primary structure comprises 868 residues: Alanine--tRNA ligase (868 aa).

Zn(2+) contacts are provided by His-553, His-557, Cys-657, and His-661. The tract at residues 831–851 (GGKGGGRADMAQAGGSRPQAL) is disordered.

It belongs to the class-II aminoacyl-tRNA synthetase family. Zn(2+) is required as a cofactor.

The protein localises to the cytoplasm. It carries out the reaction tRNA(Ala) + L-alanine + ATP = L-alanyl-tRNA(Ala) + AMP + diphosphate. Its function is as follows. Catalyzes the attachment of alanine to tRNA(Ala) in a two-step reaction: alanine is first activated by ATP to form Ala-AMP and then transferred to the acceptor end of tRNA(Ala). Also edits incorrectly charged Ser-tRNA(Ala) and Gly-tRNA(Ala) via its editing domain. This chain is Alanine--tRNA ligase, found in Chromohalobacter salexigens (strain ATCC BAA-138 / DSM 3043 / CIP 106854 / NCIMB 13768 / 1H11).